A 179-amino-acid polypeptide reads, in one-letter code: Protein GrpE (179 aa).

The span at 1–14 shows a compositional bias: basic and acidic residues; sequence MSKKDKKEEIKEEV. A disordered region spans residues 1 to 40; sequence MSKKDKKEEIKEEVEATEPTTEESVEEVAEETSENKELQE. Positions 15–32 are enriched in acidic residues; that stretch reads EATEPTTEESVEEVAEET.

This sequence belongs to the GrpE family. Homodimer.

The protein resides in the cytoplasm. Participates actively in the response to hyperosmotic and heat shock by preventing the aggregation of stress-denatured proteins, in association with DnaK and GrpE. It is the nucleotide exchange factor for DnaK and may function as a thermosensor. Unfolded proteins bind initially to DnaJ; upon interaction with the DnaJ-bound protein, DnaK hydrolyzes its bound ATP, resulting in the formation of a stable complex. GrpE releases ADP from DnaK; ATP binding to DnaK triggers the release of the substrate protein, thus completing the reaction cycle. Several rounds of ATP-dependent interactions between DnaJ, DnaK and GrpE are required for fully efficient folding. In Streptococcus mutans serotype c (strain ATCC 700610 / UA159), this protein is Protein GrpE.